A 520-amino-acid chain; its full sequence is Pentatricopeptide repeat-containing protein At1g28690, mitochondrial (520 aa).

The N-terminal 19 residues, 1–19 (MRIFRFTSISPRILPSNHY), are a transit peptide targeting the mitochondrion. 11 PPR repeats span residues 68-98 (DLNI…LPKP), 99-133 (TLSA…GEKA), 134-168 (DGYT…RIIK), 174-208 (DDVL…NVVC), 209-235 (CTSM…TKVK), 236-271 (DIVV…GFHP), 272-306 (NIST…GVYT), 307-337 (HIKM…MQEK), 338-372 (NVFS…RIEP), 373-403 (NYVT…MQRD), and 409-439 (KMEH…MPER). A type E motif region spans residues 444 to 520 (IWAALLSSCN…TIGRSWTSED (77 aa)).

This sequence belongs to the PPR family. PCMP-E subfamily.

The protein resides in the mitochondrion. This chain is Pentatricopeptide repeat-containing protein At1g28690, mitochondrial (PCMP-E34), found in Arabidopsis thaliana (Mouse-ear cress).